The following is a 467-amino-acid chain: DNA methyltransferase 1-associated protein 1 (467 aa).

Basic and acidic residues-rich tracts occupy residues 1-11 (MATGADVRDIL) and 26-48 (SKKD…LTFK). The segment at 1–48 (MATGADVRDILELGGPEGDAASGTISKKDIINPDKKKSKKSSETLTFK) is disordered. Lys-27 participates in a covalent cross-link: Glycyl lysine isopeptide (Lys-Gly) (interchain with G-Cter in SUMO2). The SANT domain occupies 149 to 199 (DDAWTKAETDHLFDLSRRFDLRFVVIHDRYDHQQFKKRSVEDLKERYYHIC). Lys-214 participates in a covalent cross-link: Glycyl lysine isopeptide (Lys-Gly) (interchain with G-Cter in SUMO2). Positions 225-275 (RRKEQLERLYNRTPEQVAEEEYLLQELRKIEARKKEREKRSQDLQKLITAA) form a coiled coil. A compositionally biased stretch (basic and acidic residues) spans 258 to 267 (KKEREKRSQD). Disordered regions lie at residues 258–305 (KKER…PAVP) and 404–467 (LGGP…AKKP). The span at 406–422 (GPATPASGPGPASAEPA) shows a compositional bias: low complexity. Thr-445 carries the phosphothreonine modification. A Phosphoserine modification is found at Ser-448.

As to quaternary structure, component of the NuA4 histone acetyltransferase complex which contains the catalytic subunit KAT5/TIP60 and the subunits EP400, TRRAP/PAF400, BRD8/SMAP, EPC1, DMAP1/DNMAP1, RUVBL1/TIP49, RUVBL2, ING3, actin, ACTL6A/BAF53A, MORF4L1/MRG15, MORF4L2/MRGX, MRGBP, YEATS4/GAS41, VPS72/YL1 and MEAF6. Component of a NuA4-related complex which contains EP400, TRRAP/PAF400, SRCAP, BRD8/SMAP, EPC1, DMAP1/DNMAP1, RUVBL1/TIP49, RUVBL2, actin, ACTL6A/BAF53A, VPS72 and YEATS4/GAS41. DMAP1 also forms a complex with DNMT1 and HDAC2. Throughout S phase it interacts directly with the N-terminus of DNMT1, which serves to recruit DMAP1 to replication foci. DMAP1 interacts with ING1, a component of the mSin3A transcription repressor complex, although this interaction is not required for recruitment of ING1 to heterochromatin. Interacts directly with the transcriptional corepressor TSG101. Interacts with the pro-apoptotic protein DAXX. Interacts with URI1.

It localises to the nucleus. The protein localises to the cytoplasm. Its function is as follows. Involved in transcription repression and activation. Its interaction with HDAC2 may provide a mechanism for histone deacetylation in heterochromatin following replication of DNA at late firing origins. Can also repress transcription independently of histone deacetylase activity. May specifically potentiate DAXX-mediated repression of glucocorticoid receptor-dependent transcription. Component of the NuA4 histone acetyltransferase (HAT) complex which is involved in transcriptional activation of select genes principally by acetylation of nucleosomal histones H4 and H2A. This modification may both alter nucleosome - DNA interactions and promote interaction of the modified histones with other proteins which positively regulate transcription. This complex may be required for the activation of transcriptional programs associated with oncogene and proto-oncogene mediated growth induction, tumor suppressor mediated growth arrest and replicative senescence, apoptosis, and DNA repair. NuA4 may also play a direct role in DNA repair when recruited to sites of DNA damage. Participates in the nuclear localization of URI1 and increases its transcriptional corepressor activity. The polypeptide is DNA methyltransferase 1-associated protein 1 (DMAP1) (Homo sapiens (Human)).